Reading from the N-terminus, the 412-residue chain is NAD-dependent dihydropyrimidine dehydrogenase subunit PreT (412 aa).

NAD(+) is bound at residue Glu-286.

This sequence belongs to the NADH dehydrogenase family. In terms of assembly, heterotetramer of 2 PreA and 2 PreT subunits.

The enzyme catalyses 5,6-dihydrouracil + NAD(+) = uracil + NADH + H(+). The catalysed reaction is 5,6-dihydrothymine + NAD(+) = thymine + NADH + H(+). In terms of biological role, involved in pyrimidine base degradation. Catalyzes physiologically the reduction of uracil to 5,6-dihydrouracil (DHU) by using NADH as a specific cosubstrate. It also catalyzes the reverse reaction and the reduction of thymine to 5,6-dihydrothymine (DHT). In Escherichia coli O157:H7, this protein is NAD-dependent dihydropyrimidine dehydrogenase subunit PreT (preT).